The chain runs to 258 residues: Octanoyltransferase (258 aa).

The region spanning 42 to 226 (NVGTDTLLLL…AVVAALDGEL (185 aa)) is the BPL/LPL catalytic domain. Residues 80-87 (RGGKITWH), 156-158 (AIG), and 169-171 (GFS) contribute to the substrate site. Cys187 (acyl-thioester intermediate) is an active-site residue.

Belongs to the LipB family.

The protein localises to the cytoplasm. The catalysed reaction is octanoyl-[ACP] + L-lysyl-[protein] = N(6)-octanoyl-L-lysyl-[protein] + holo-[ACP] + H(+). It functions in the pathway protein modification; protein lipoylation via endogenous pathway; protein N(6)-(lipoyl)lysine from octanoyl-[acyl-carrier-protein]: step 1/2. Its function is as follows. Catalyzes the transfer of endogenously produced octanoic acid from octanoyl-acyl-carrier-protein onto the lipoyl domains of lipoate-dependent enzymes. Lipoyl-ACP can also act as a substrate although octanoyl-ACP is likely to be the physiological substrate. The polypeptide is Octanoyltransferase (Rhodococcus jostii (strain RHA1)).